Here is a 423-residue protein sequence, read N- to C-terminus: Serine incorporator 5 (423 aa).

Topologically, residues 1–36 (MSAQCCAGQLACCCGSAGCSLCCDCCPRIRQSLSTR) are extracellular. Residues 37-57 (FMYALYFILVVVLCCIMMSTT) traverse the membrane as a helical segment. Residues 58-89 (VAHKMKEHIPFFEDMCKGIKAGDTCEKLVGYS) lie on the Cytoplasmic side of the membrane. A helical transmembrane segment spans residues 90-110 (AVYRVCFGMACFFFIFCLLTL). At 111–124 (KINNSKSCRAHIHN) the chain is on the extracellular side. The N-linked (GlcNAc...) asparagine glycan is linked to Asn113. A helical membrane pass occupies residues 125-145 (GFWFFKLLLLGAMCSGAFFIP). Residues 146-156 (DQDTFLNAWRY) are Cytoplasmic-facing. Residues 157–177 (VGAVGGFLFIGIQLLLLVEFA) form a helical membrane-spanning segment. Residues 178-198 (HKWNKNWTAGTASNKLWYASL) are Extracellular-facing. Asn183 carries an N-linked (GlcNAc...) asparagine glycan. A helical membrane pass occupies residues 199–219 (ALVTLIMYSIATGGLVLMAVF). Topologically, residues 220–230 (YTQKDSCMENK) are cytoplasmic. The helical transmembrane segment at 231 to 251 (ILLGVNGGLCLLISLVAISPW) threads the bilayer. The Extracellular portion of the chain corresponds to 252 to 258 (VQNRQPH). The chain crosses the membrane as a helical span at residues 259 to 279 (SGLLQSGVISCYVTYLTFSAL). Residues 280 to 311 (SSKPAEVVLDEHGKNVTICVPDFGQDLYRDEN) are Cytoplasmic-facing. Residues 312–332 (LVTILGTSLLIGCILYSCLTS) form a helical membrane-spanning segment. The Extracellular segment spans residues 333–385 (TTRSSSDALQGRYAAPELEIARCCFCFSPGGEDTEEQQPGKEGPRVIYDEKKG). Residues 386-406 (TVYIYSYFHFVFFLASLYVMM) form a helical membrane-spanning segment. Topologically, residues 407 to 423 (TVTNWFNHVRSAFHLLP) are cytoplasmic.

It belongs to the TDE1 family. Highly expressed in placenta, skeletal muscle, spleen, thymus, testis and peripheral leukocyte and is expressed weakly in the heart, liver and fetal brain.

Its subcellular location is the cell membrane. The protein resides in the cytoplasm. The protein localises to the perinuclear region. The catalysed reaction is a 1,2-diacyl-sn-glycero-3-phospho-L-serine(in) = a 1,2-diacyl-sn-glycero-3-phospho-L-serine(out). The enzyme catalyses a 1,2-diacyl-sn-glycero-3-phosphocholine(in) = a 1,2-diacyl-sn-glycero-3-phosphocholine(out). It catalyses the reaction a 1,2-diacyl-sn-glycero-3-phosphoethanolamine(in) = a 1,2-diacyl-sn-glycero-3-phosphoethanolamine(out). Restriction factor required to restrict infectivity of lentiviruses, such as HIV-1: acts by inhibiting an early step of viral infection. Impairs the penetration of the viral particle into the cytoplasm. Non-ATP-dependent, non-specific lipid transporter for phosphatidylserine, phosphatidylcholine, and phosphatidylethanolamine. Functions as a scramblase that flips lipids in both directions across the membrane. Phospholipid scrambling results in HIV-1 surface exposure of phosphatidylserine and loss of membrane asymmetry, which leads to changes in HIV-1 Env conformation and loss of infectivity. Enhances the incorporation of serine into phosphatidylserine and sphingolipids. May play a role in providing serine molecules for the formation of myelin glycosphingolipids in oligodendrocytes. The protein is Serine incorporator 5 of Homo sapiens (Human).